Consider the following 399-residue polypeptide: MDTHAFKRSLHHSDRYNRRGFGRAEEVAGSLEQAYQSSLIGSIRDNGYRLNHGRLQVRLAKDFGFCWGVERAVAMAYETRKHYPSERLWITNEIIHNPSVNDHLREMNVQFIPVEQGVKDFSGVTSGDVVILPAFGATVQEMQLLNERGCHIVDTTCPWVSKVWNTVEKHKKQTFTSIIHGKVKHEETLATSSFAGTYLVVLDLEEAQIVADYILGNGDRDSFMARFSKACSPGFDPDQDLEKLGVANQTTMLKRETEEIGRLFERTMLSKFGPTQLNEHFLAFNTICDATQERQDAMFSLVDEPLDLMVVIGGYNSSNTTHLQEIAINRGIRSFHIDTPERISADNSIEHKPLGQELIRELEFLPSGTVTVGITSGASTPDRVVEHVIQRLISLSEEN.

Residue cysteine 66 coordinates [4Fe-4S] cluster. Histidine 96 serves as a coordination point for (2E)-4-hydroxy-3-methylbut-2-enyl diphosphate. A dimethylallyl diphosphate-binding site is contributed by histidine 96. Position 96 (histidine 96) interacts with isopentenyl diphosphate. Residue cysteine 157 participates in [4Fe-4S] cluster binding. Residue histidine 185 coordinates (2E)-4-hydroxy-3-methylbut-2-enyl diphosphate. Dimethylallyl diphosphate is bound at residue histidine 185. Histidine 185 provides a ligand contact to isopentenyl diphosphate. The Proton donor role is filled by glutamate 187. Threonine 250 provides a ligand contact to (2E)-4-hydroxy-3-methylbut-2-enyl diphosphate. Cysteine 288 contacts [4Fe-4S] cluster. Serine 317, serine 318, asparagine 319, and serine 379 together coordinate (2E)-4-hydroxy-3-methylbut-2-enyl diphosphate. Dimethylallyl diphosphate is bound by residues serine 317, serine 318, asparagine 319, and serine 379. Isopentenyl diphosphate is bound by residues serine 317, serine 318, asparagine 319, and serine 379.

Belongs to the IspH family. The cofactor is [4Fe-4S] cluster.

It carries out the reaction isopentenyl diphosphate + 2 oxidized [2Fe-2S]-[ferredoxin] + H2O = (2E)-4-hydroxy-3-methylbut-2-enyl diphosphate + 2 reduced [2Fe-2S]-[ferredoxin] + 2 H(+). It catalyses the reaction dimethylallyl diphosphate + 2 oxidized [2Fe-2S]-[ferredoxin] + H2O = (2E)-4-hydroxy-3-methylbut-2-enyl diphosphate + 2 reduced [2Fe-2S]-[ferredoxin] + 2 H(+). The protein operates within isoprenoid biosynthesis; dimethylallyl diphosphate biosynthesis; dimethylallyl diphosphate from (2E)-4-hydroxy-3-methylbutenyl diphosphate: step 1/1. It functions in the pathway isoprenoid biosynthesis; isopentenyl diphosphate biosynthesis via DXP pathway; isopentenyl diphosphate from 1-deoxy-D-xylulose 5-phosphate: step 6/6. Functionally, catalyzes the conversion of 1-hydroxy-2-methyl-2-(E)-butenyl 4-diphosphate (HMBPP) into a mixture of isopentenyl diphosphate (IPP) and dimethylallyl diphosphate (DMAPP). Acts in the terminal step of the DOXP/MEP pathway for isoprenoid precursor biosynthesis. The chain is 4-hydroxy-3-methylbut-2-enyl diphosphate reductase from Synechococcus sp. (strain WH7803).